Reading from the N-terminus, the 370-residue chain is Aldo-keto reductase dtxS3 (370 aa).

Aspartate 78 lines the NADP(+) pocket. Tyrosine 83 functions as the Proton donor in the catalytic mechanism. Histidine 174 is a binding site for substrate. NADP(+) contacts are provided by residues 204-205 (SS), glutamine 230, 259-269 (GPLASGRLARR), and 333-341 (GSVGRIEEA).

This sequence belongs to the aldo/keto reductase family.

The protein operates within secondary metabolite biosynthesis. Aldo-keto reductase; part of the gene cluster that mediates the biosynthesis of destruxins, insecticidal cyclic hexadepsipeptides which induce flaccid paralysis and visceral muscle contraction in insects through targeting the calcium channels and vacuolar-type ATPases. The aldo-keto reductase dtxS3 converts alpha-ketoisocaproic acid from deaminated leucine into alpha-hydroxyisocaproic acid (HIC), which is the first substrate for destruxin assembly by dtxS1. L-aspartate decarboxylase dtxS4 converts aspartic acid into beta-alanine, the last substrate for the destruxin assembly line performed by dtxS1. The nonribosomal peptide synthetase dtxS1 synthesizes destruxins B and B2, whereas the cytochrome P450 monooxygenase dtxS2 is required to convert destruxin B into other destruxin derivatives, including destructins C, D, A and E. Destruxin E-diol (ED) is further produced in a non-enzymatic manner from destruxin E. Destruxins play an important role in virulence and escape from insect host immune defenses. This chain is Aldo-keto reductase dtxS3, found in Metarhizium robertsii (strain ARSEF 23 / ATCC MYA-3075) (Metarhizium anisopliae (strain ARSEF 23)).